The following is a 96-amino-acid chain: Class I hydrophobin 3 (96 aa).

The N-terminal stretch at 1-18 is a signal peptide; it reads MQFAKIASVLAMAAAAVA. Disulfide bonds link Cys-43–Cys-72, Cys-51–Cys-66, Cys-52–Cys-57, and Cys-73–Cys-92.

The protein belongs to the fungal hydrophobin family.

Its subcellular location is the secreted. It localises to the cell wall. Its function is as follows. Aerial growth, conidiation, and dispersal of filamentous fungi in the environment rely upon a capability of their secreting small amphipathic proteins called hydrophobins (HPBs) with low sequence identity. Class I can self-assemble into an outermost layer of rodlet bundles on aerial cell surfaces, conferring cellular hydrophobicity that supports fungal growth, development and dispersal; whereas Class II form highly ordered films at water-air interfaces through intermolecular interactions but contribute nothing to the rodlet structure. Does not seem to be important for the ability to cause seedling disease. The chain is Class I hydrophobin 3 from Gibberella moniliformis (Maize ear and stalk rot fungus).